The following is a 236-amino-acid chain: 2,3,4,5-tetrahydropyridine-2,6-dicarboxylate N-acetyltransferase (236 aa).

It belongs to the transferase hexapeptide repeat family. DapH subfamily.

It carries out the reaction (S)-2,3,4,5-tetrahydrodipicolinate + acetyl-CoA + H2O = L-2-acetamido-6-oxoheptanedioate + CoA. It functions in the pathway amino-acid biosynthesis; L-lysine biosynthesis via DAP pathway; LL-2,6-diaminopimelate from (S)-tetrahydrodipicolinate (acetylase route): step 1/3. In terms of biological role, catalyzes the transfer of an acetyl group from acetyl-CoA to tetrahydrodipicolinate. This chain is 2,3,4,5-tetrahydropyridine-2,6-dicarboxylate N-acetyltransferase, found in Limosilactobacillus reuteri (strain DSM 20016) (Lactobacillus reuteri).